The sequence spans 722 residues: Ribosomal RNA large subunit methyltransferase K/L (722 aa).

Residues 55-167 (TGYRACLWSR…GNEGTLYLDL (113 aa)) form the THUMP domain.

Belongs to the methyltransferase superfamily. RlmKL family.

The protein localises to the cytoplasm. The enzyme catalyses guanosine(2445) in 23S rRNA + S-adenosyl-L-methionine = N(2)-methylguanosine(2445) in 23S rRNA + S-adenosyl-L-homocysteine + H(+). It carries out the reaction guanosine(2069) in 23S rRNA + S-adenosyl-L-methionine = N(2)-methylguanosine(2069) in 23S rRNA + S-adenosyl-L-homocysteine + H(+). Its function is as follows. Specifically methylates the guanine in position 2445 (m2G2445) and the guanine in position 2069 (m7G2069) of 23S rRNA. This is Ribosomal RNA large subunit methyltransferase K/L from Desulfotalea psychrophila (strain LSv54 / DSM 12343).